We begin with the raw amino-acid sequence, 514 residues long: Nucleus accumbens-associated protein 1 (514 aa).

The 65-residue stretch at 30–94 (CDVSVVVKGH…CYTGRLSMNM (65 aa)) folds into the BTB domain. A Glycyl lysine isopeptide (Lys-Gly) (interchain with G-Cter in SUMO1); alternate cross-link involves residue K167. K167 participates in a covalent cross-link: Glycyl lysine isopeptide (Lys-Gly) (interchain with G-Cter in SUMO2); alternate. K182 is covalently cross-linked (Glycyl lysine isopeptide (Lys-Gly) (interchain with G-Cter in SUMO2)). Disordered stretches follow at residues 183 to 205 (RLWD…RKMA) and 242 to 279 (PSMS…EEGT). S187 carries the phosphoserine modification. Residues 242–251 (PSMSERTSPG) show a composition bias toward polar residues. A Phosphoserine; by PKC modification is found at S245. Low complexity predominate over residues 252 to 264 (TSSAYTSDSPSSY). The span at 267–279 (EEDEEEDAGEEGT) shows a compositional bias: acidic residues. Glycyl lysine isopeptide (Lys-Gly) (interchain with G-Cter in SUMO2) cross-links involve residues K304, K438, K466, and K485. The 98-residue stretch at 360–457 (GTNVYITRAQ…DMCTNARRVV (98 aa)) folds into the BEN domain. Phosphoserine is present on residues S492 and S496.

Homooligomer; mediated by the BTB domain. Interacts with HDAC3 and HDAC4. Interacts (via BTB domain) with CUL3, PSMD7 and RCOR1. In terms of tissue distribution, ubiquitously expressed with higher expression in the brain, kidney and liver, and at lower levels in heart, lung and testes.

The protein localises to the nucleus. It is found in the cytoplasm. In terms of biological role, functions as a transcriptional repressor. Seems to function as a transcriptional corepressor in neuronal cells through recruitment of HDAC3 and HDAC4. Contributes to tumor progression, and tumor cell proliferation and survival. This may be mediated at least in part through repressing transcriptional activity of GADD45GIP1. Required for recruiting the proteasome from the nucleus to the cytoplasm and dendritic spines. Involved in the acute behavioral and neurological responses to cocaine and amphetamines. The sequence is that of Nucleus accumbens-associated protein 1 (Nacc1) from Mus musculus (Mouse).